The chain runs to 319 residues: MNLDSFFSFLLKSLIMALSNSSWRLPQPSFFLVGIPGLEESQHWIALPLGILYLLALVGNVTILFIIWMDPSLHQSMYLFLSMLAAIDLVVASSTAPKALAVLLVRAQEIGYTVCLIQMFFTHAFSSMESGVLVAMALDRYVAICHPLHHSTILHPGVIGHIGMVVLVRGLLLLIPFLILLRKLIFCQATIIGHAYCEHMAVVKLACSETTVNRAYGLTVALLVVGLDVLAIGVSYAHILQAVLKVPGNEARLKAFSTCGSHVCVILVFYIPGMFSFLTHRFGHHVPHHVHVLLAILYRLVPPALNPLVYRVKTQKIHQ.

Residues 1 to 43 are Extracellular-facing; sequence MNLDSFFSFLLKSLIMALSNSSWRLPQPSFFLVGIPGLEESQH. The N-linked (GlcNAc...) asparagine glycan is linked to asparagine 20. The chain crosses the membrane as a helical span at residues 44–64; sequence WIALPLGILYLLALVGNVTIL. Topologically, residues 65 to 72 are cytoplasmic; sequence FIIWMDPS. A helical membrane pass occupies residues 73 to 93; the sequence is LHQSMYLFLSMLAAIDLVVAS. The Extracellular portion of the chain corresponds to 94-117; that stretch reads STAPKALAVLLVRAQEIGYTVCLI. Cysteine 115 and cysteine 207 form a disulfide bridge. A helical transmembrane segment spans residues 118–138; the sequence is QMFFTHAFSSMESGVLVAMAL. Topologically, residues 139–157 are cytoplasmic; it reads DRYVAICHPLHHSTILHPG. A helical membrane pass occupies residues 158–178; the sequence is VIGHIGMVVLVRGLLLLIPFL. The Extracellular segment spans residues 179–214; the sequence is ILLRKLIFCQATIIGHAYCEHMAVVKLACSETTVNR. The helical transmembrane segment at 215 to 235 threads the bilayer; it reads AYGLTVALLVVGLDVLAIGVS. At 236–255 the chain is on the cytoplasmic side; that stretch reads YAHILQAVLKVPGNEARLKA. The chain crosses the membrane as a helical span at residues 256 to 276; it reads FSTCGSHVCVILVFYIPGMFS. The Extracellular segment spans residues 277-291; that stretch reads FLTHRFGHHVPHHVH. A helical membrane pass occupies residues 292–312; sequence VLLAILYRLVPPALNPLVYRV. Residues 313–319 are Cytoplasmic-facing; sequence KTQKIHQ.

The protein belongs to the G-protein coupled receptor 1 family.

The protein resides in the cell membrane. Its function is as follows. Odorant receptor. The chain is Putative olfactory receptor 52L2 (OR52L2P) from Homo sapiens (Human).